A 165-amino-acid polypeptide reads, in one-letter code: Chorismate pyruvate-lyase (165 aa).

Substrate is bound by residues Met-35, Arg-77, Leu-115, and Glu-156.

Belongs to the UbiC family. As to quaternary structure, monomer.

It is found in the cytoplasm. It carries out the reaction chorismate = 4-hydroxybenzoate + pyruvate. Its pathway is cofactor biosynthesis; ubiquinone biosynthesis. Its function is as follows. Removes the pyruvyl group from chorismate, with concomitant aromatization of the ring, to provide 4-hydroxybenzoate (4HB) for the ubiquinone pathway. The sequence is that of Chorismate pyruvate-lyase from Escherichia coli (strain K12 / MC4100 / BW2952).